The following is a 201-amino-acid chain: Ribosome maturation factor RimP (201 aa).

It belongs to the RimP family.

It localises to the cytoplasm. Required for maturation of 30S ribosomal subunits. This Acidobacterium capsulatum (strain ATCC 51196 / DSM 11244 / BCRC 80197 / JCM 7670 / NBRC 15755 / NCIMB 13165 / 161) protein is Ribosome maturation factor RimP.